The following is a 300-amino-acid chain: MKTNKIVFIFGPTAVGKSDILFHFPKGVAEVISVDSIQVYKEFDIASCKPSIELRSHIRHHLVDFLEPIYEYNLGIFYKESCKIIESLREQKKIPIFVGGSAFYFKHLKYGLPSAPPVSDKVRLYINNLFIRMGKDYLLEELRRVDFKRYESINQNDIYRIKRSLEVYFQTGIPISQFLQRENMFENIVAIGLRRPMDEMKSRIISRVKNMIDCGLLDEIKSLLGKGYDEKTPAFKGIGYREFLLWRSRPCYLLNDIINLIVKNSFLYVKRQMTFFNKLPNVLWFHPDDDLKNILDLIFV.

An ATP-binding site is contributed by 11–18 (GPTAVGKS). 13-18 (TAVGKS) is a substrate binding site. The interval 35–38 (DSIQ) is interaction with substrate tRNA.

The protein belongs to the IPP transferase family. In terms of assembly, monomer. Mg(2+) is required as a cofactor.

It catalyses the reaction adenosine(37) in tRNA + dimethylallyl diphosphate = N(6)-dimethylallyladenosine(37) in tRNA + diphosphate. Functionally, catalyzes the transfer of a dimethylallyl group onto the adenine at position 37 in tRNAs that read codons beginning with uridine, leading to the formation of N6-(dimethylallyl)adenosine (i(6)A). The polypeptide is tRNA dimethylallyltransferase (Borrelia recurrentis (strain A1)).